Here is a 199-residue protein sequence, read N- to C-terminus: V-set and transmembrane domain-containing protein 5 (199 aa).

Positions 1-27 (MRPPRCVGRTQGIPLGLLAFWVATARC) are cleaved as a signal peptide. The Extracellular portion of the chain corresponds to 28-146 (LQSQGVSLYI…VSEIRYEDLH (119 aa)). The Ig-like C2-type domain maps to 36 to 138 (YIPRSAINAT…QSGTILLHVS (103 aa)). Residues asparagine 43, asparagine 87, and asparagine 101 are each glycosylated (N-linked (GlcNAc...) asparagine). Residues 147 to 167 (FVAVFFALLAAVAVVLISLMW) traverse the membrane as a helical segment. At 168-199 (VCNQCAYKFQRKRRYKLRESTTEEIEMKDVEC) the chain is on the cytoplasmic side. An important for CDC42-dependent filopodia induction region spans residues 169 to 185 (CNQCAYKFQRKRRYKLR).

Can homooligomerize through cis interactions within the same cell membrane. Post-translationally, N-glycosylated.

The protein localises to the cell membrane. It localises to the cell projection. Its subcellular location is the dendrite. The protein resides in the axon. In terms of biological role, cell adhesion-like membrane protein of the central nervous system (CNS) which modulates both the position and complexity of central neurons by altering their membrane morphology and dynamics. Involved in the formation of neuronal dendrites and protrusions including dendritic filopodia. In synaptogenesis, regulates synapse formation by altering dendritic spine morphology and actin distribution. Promotes formation of unstable neuronal spines such as thin and branched types. Regulates neuronal morphogenesis and migration during cortical development in the brain. The protein is V-set and transmembrane domain-containing protein 5 (Vstm5) of Rattus norvegicus (Rat).